The sequence spans 73 residues: Pollen allergen Amb t 5 (73 aa).

The N-terminal stretch at 1–20 (MKNIFMLTLFILIITSTIKA) is a signal peptide. Residues 21-33 (IGSTNEVDEIKQE) constitute a propeptide that is removed on maturation. Disulfide bonds link C38/C68, C44/C59, C51/C61, and C52/C72.

In terms of assembly, monomer.

The chain is Pollen allergen Amb t 5 from Ambrosia trifida (Giant ragweed).